Here is a 548-residue protein sequence, read N- to C-terminus: MNPSTTQARVVVDELIRGGVRDVVLCPGSRNAPLAFALQDADRSGRIRLHVRIDERTAGFLAIGLAVGAGAPACVAMTSGTAVANLGPAVVEANYARVPLIVLSANRPYELLGTGANQTMEQLGYFGTQVRATISLGLAEDAHERLDSLNASWRSATCRVLAAAMGSRTANAGPVHFDIPLREPLVPDPEPHGAVTPPGRPEGRPWTYTPPVTFDQPLEIDLSADTVVIAGHGAGVHPNLVQLPTIAEPTAPAAPSGGNPLHPLALPLLRPRQVIMLGRPTLHRPVSALLADPEVPVFALTTGPRWPDVSGNSQATGTRAIVTGTPNPSWLDRCAQMNRHAVAAVREQLAAHPLTTGLHVAAAVAGALRPGDQLVLGASNPVRDAALVGLDTAGLRVRSNRGVAGIDGTVSTAIGAALGYERDHHGRTVALIGDLTFVHDSSGLLIGPTEPTPRQLTIVVSNDNGGGIFELLEQGDPRFSDVSSRIFGTPHDVDVGALCRAYHVENRQIEVDQLPAALDEPGSGLRVLEVKADRSSLRQLHAAIKAAL.

Belongs to the TPP enzyme family. MenD subfamily. As to quaternary structure, homodimer. Mg(2+) serves as cofactor. It depends on Mn(2+) as a cofactor. Thiamine diphosphate is required as a cofactor.

The catalysed reaction is isochorismate + 2-oxoglutarate + H(+) = 5-enolpyruvoyl-6-hydroxy-2-succinyl-cyclohex-3-ene-1-carboxylate + CO2. It functions in the pathway quinol/quinone metabolism; 1,4-dihydroxy-2-naphthoate biosynthesis; 1,4-dihydroxy-2-naphthoate from chorismate: step 2/7. It participates in quinol/quinone metabolism; menaquinone biosynthesis. Catalyzes the thiamine diphosphate-dependent decarboxylation of 2-oxoglutarate and the subsequent addition of the resulting succinic semialdehyde-thiamine pyrophosphate anion to isochorismate to yield 2-succinyl-5-enolpyruvyl-6-hydroxy-3-cyclohexene-1-carboxylate (SEPHCHC). The chain is 2-succinyl-5-enolpyruvyl-6-hydroxy-3-cyclohexene-1-carboxylate synthase from Mycobacterium marinum (strain ATCC BAA-535 / M).